Consider the following 286-residue polypeptide: ATP phosphoribosyltransferase (286 aa).

Belongs to the ATP phosphoribosyltransferase family. Long subfamily. Mg(2+) serves as cofactor.

Its subcellular location is the cytoplasm. The catalysed reaction is 1-(5-phospho-beta-D-ribosyl)-ATP + diphosphate = 5-phospho-alpha-D-ribose 1-diphosphate + ATP. Its pathway is amino-acid biosynthesis; L-histidine biosynthesis; L-histidine from 5-phospho-alpha-D-ribose 1-diphosphate: step 1/9. Feedback inhibited by histidine. In terms of biological role, catalyzes the condensation of ATP and 5-phosphoribose 1-diphosphate to form N'-(5'-phosphoribosyl)-ATP (PR-ATP). Has a crucial role in the pathway because the rate of histidine biosynthesis seems to be controlled primarily by regulation of HisG enzymatic activity. This is ATP phosphoribosyltransferase from Arthrobacter sp. (strain FB24).